A 171-amino-acid chain; its full sequence is Putative ankyrin repeat protein PA3287 (171 aa).

3 ANK repeats span residues Lys48–Leu77, Ala81–Gly110, and Asp114–Ala143.

In Pseudomonas aeruginosa (strain ATCC 15692 / DSM 22644 / CIP 104116 / JCM 14847 / LMG 12228 / 1C / PRS 101 / PAO1), this protein is Putative ankyrin repeat protein PA3287.